We begin with the raw amino-acid sequence, 822 residues long: BDNF/NT-3 growth factors receptor (822 aa).

Residues 1 to 31 form the signal peptide; sequence MSSWIRWHGPAMARLWGFCWLVVGFWRAAFA. 2 cysteine pairs are disulfide-bonded: C32-C38 and C36-C45. In terms of domain architecture, LRRNT spans 32-61; that stretch reads CPTSCKCSASRIWCSDPSPGIVAFPRLEPN. Residues 32–430 lie on the Extracellular side of the membrane; it reads CPTSCKCSAS…DVTDKTGREH (399 aa). Residues N67, N95, and N121 are each glycosylated (N-linked (GlcNAc...) asparagine). LRR repeat units follow at residues 92-113 and 116-137; these read GLRN…AFLK and NLQH…HFRH. An LRRCT domain is found at 148–196; sequence NPFTCSCDIMWIKTLQEAKSSPDTQDLYCLNESSKNIPLANLQIPNCGL. Intrachain disulfides connect C152–C176 and C154–C194. Residues N178, N205, N241, N254, N280, N325, N338, and N412 are each glycosylated (N-linked (GlcNAc...) asparagine). Ig-like C2-type domains lie at 197 to 282 and 295 to 365; these read PSAN…VNLT and PTSD…IAKN. A disulfide bond links C218 and C266. A disulfide bridge links C302 with C345. Residues 431–454 form a helical membrane-spanning segment; sequence LSVYAVVVIASVVGFCLLVMLFLL. The interaction with MAPK8IP3/JIP3 stretch occupies residues 455–466; the sequence is KLARHSKFGMKG. Residues 455–822 are Cytoplasmic-facing; sequence KLARHSKFGM…ASPVYLDILG (368 aa). Residues 475 to 498 form a disordered region; the sequence is DDSASPLHHISNGSNTPSSSEGGP. Positions 485–495 are enriched in polar residues; that stretch reads SNGSNTPSSSE. Y516 carries the post-translational modification Phosphotyrosine; by autocatalysis. Positions 538 to 807 constitute a Protein kinase domain; sequence IVLKRELGEG…KNIKGIHTLL (270 aa). Residues 544–552 and K572 contribute to the ATP site; that span reads LGEGAFGKV. Residue D676 is the Proton acceptor of the active site. Y702, Y706, Y707, and Y817 each carry phosphotyrosine; by autocatalysis.

It belongs to the protein kinase superfamily. Tyr protein kinase family. Insulin receptor subfamily. As to quaternary structure, exists in a dynamic equilibrium between monomeric (low affinity) and dimeric (high affinity) structures. Interacts (phosphorylated upon activation by BDNF) with SHC1; mediates SHC1 phosphorylation and activation. Interacts (phosphorylated upon activation by BDNF) with PLCG1 and/or PLCG2; mediates PLCG1 phosphorylation and activation. Interacts with SH2B1 and SH2B2. Interacts with NGFR; may regulate the ligand specificity of the receptor. Interacts with SORCS2; this interaction is important for normal targeting to post-synaptic densities in response to high-frequency stimulation. Interacts (phosphorylated upon ligand-binding) with SH2D1A; regulates NTRK2. Interacts with SQSTM1 and KIDINS220. Interacts (phosphorylated upon ligand-binding) with FRS2; activates the MAPK signaling pathway. Interacts with APPL1. Interacts with MAPK8IP3/JIP3 and KLC1; interaction with KLC1 is mediated by MAPK8IP3/JIP3. Interacts with SORL1; this interaction facilitates NTRK2 trafficking between synaptic plasma membranes, postsynaptic densities and cell soma, hence positively regulates BDNF signaling. Interacts with SLITRK2. In terms of processing, phosphorylated. Undergoes ligand-mediated autophosphorylation that is required for interaction with SHC1 and PLCG1 and other downstream effectors. Isoform TrkB-T-Shc is not phosphorylated. Post-translationally, ubiquitinated. Undergoes polyubiquitination upon activation; regulated by NGFR. Ubiquitination regulates the internalization of the receptor. Isoform TrkB is expressed in the central and peripheral nervous system. In the central nervous system (CNS), expression is observed in the cerebral cortex, hippocampus, thalamus, choroid plexus, granular layer of the cerebellum, brain stem, and spinal cord. In the peripheral nervous system, it is expressed in many cranial ganglia, the ophthalmic nerve, the vestibular system, multiple facial structures, the submaxillary glands, and dorsal root ganglia. Isoform TrkB-T1 is mainly expressed in the brain but also detected in other tissues including pancreas, kidney and heart. Isoform TrkB-T-Shc is predominantly expressed in the brain.

It is found in the cell membrane. The protein localises to the endosome membrane. The protein resides in the early endosome membrane. It localises to the cell projection. Its subcellular location is the axon. It is found in the dendrite. The protein localises to the cytoplasm. The protein resides in the perinuclear region. It localises to the postsynaptic density. It carries out the reaction L-tyrosyl-[protein] + ATP = O-phospho-L-tyrosyl-[protein] + ADP + H(+). With respect to regulation, the neuronal activity and the influx of calcium positively regulate the kinase activity and the internalization of the receptor which are both important for active signaling. Regulated by NGFR that may control the internalization of the receptor. NGFR may also stimulate the activation by BDNF compared to NTF3 and NTF4. SH2D1A inhibits the autophosphorylation of the receptor, and alters the recruitment and activation of downstream effectors and signaling cascades. The formation of active receptors dimers able to fully transduce the ligand-mediated signal, may be negatively regulated by the formation of inactive heterodimers with the non-catalytic isoforms. Receptor tyrosine kinase involved in the development and the maturation of the central and the peripheral nervous systems through regulation of neuron survival, proliferation, migration, differentiation, and synapse formation and plasticity. Receptor for BDNF/brain-derived neurotrophic factor and NTF4/neurotrophin-4. Alternatively can also bind NTF3/neurotrophin-3 which is less efficient in activating the receptor but regulates neuron survival through NTRK2. Upon ligand-binding, undergoes homodimerization, autophosphorylation and activation. Recruits, phosphorylates and/or activates several downstream effectors including SHC1, FRS2, SH2B1, SH2B2 and PLCG1 that regulate distinct overlapping signaling cascades. Through SHC1, FRS2, SH2B1, SH2B2 activates the GRB2-Ras-MAPK cascade that regulates for instance neuronal differentiation including neurite outgrowth. Through the same effectors controls the Ras-PI3 kinase-AKT1 signaling cascade that mainly regulates growth and survival. Through PLCG1 and the downstream protein kinase C-regulated pathways controls synaptic plasticity. Thereby, plays a role in learning and memory by regulating both short term synaptic function and long-term potentiation. PLCG1 also leads to NF-Kappa-B activation and the transcription of genes involved in cell survival. Hence, it is able to suppress anoikis, the apoptosis resulting from loss of cell-matrix interactions. May also play a role in neutrophin-dependent calcium signaling in glial cells and mediate communication between neurons and glia. This is BDNF/NT-3 growth factors receptor (NTRK2) from Homo sapiens (Human).